A 388-amino-acid polypeptide reads, in one-letter code: Succinate--CoA ligase [ADP-forming] subunit beta (388 aa).

In terms of domain architecture, ATP-grasp spans 9–244 (KGILSGFDVR…PHEYSEEELE (236 aa)). ATP is bound by residues Lys46, 53-55 (GRG), Glu99, Val102, and Glu107. Positions 199 and 213 each coordinate Mg(2+). Residues Asn264 and 320–322 (GIM) each bind substrate.

The protein belongs to the succinate/malate CoA ligase beta subunit family. Heterotetramer of two alpha and two beta subunits. Mg(2+) serves as cofactor.

The enzyme catalyses succinate + ATP + CoA = succinyl-CoA + ADP + phosphate. It carries out the reaction GTP + succinate + CoA = succinyl-CoA + GDP + phosphate. It participates in carbohydrate metabolism; tricarboxylic acid cycle; succinate from succinyl-CoA (ligase route): step 1/1. In terms of biological role, succinyl-CoA synthetase functions in the citric acid cycle (TCA), coupling the hydrolysis of succinyl-CoA to the synthesis of either ATP or GTP and thus represents the only step of substrate-level phosphorylation in the TCA. The beta subunit provides nucleotide specificity of the enzyme and binds the substrate succinate, while the binding sites for coenzyme A and phosphate are found in the alpha subunit. This chain is Succinate--CoA ligase [ADP-forming] subunit beta, found in Anaplasma phagocytophilum (strain HZ).